The chain runs to 183 residues: CyanoP (183 aa).

A signal peptide spans 1–19 (MLQRFFATALAIFVVLLGG). Residue C20 is the site of N-palmitoyl cysteine attachment. C20 carries the S-diacylglycerol cysteine lipid modification. Residues D31, D34, D54, H58, T63, E87, D91, H142, E163, and E164 each contribute to the Zn(2+) site.

The protein belongs to the PsbP family. CyanoP subfamily. Monomer. Present in very small amounts in PSII. Zn(2+) serves as cofactor.

The protein resides in the cellular thylakoid membrane. Functionally, plays a role in the early stages of photosystem II (PSII) assembly; binds to D2 (psbD) and may facilitate its incorporation into PSII. Present in less than 1% of PSII preparations. The sequence is that of CyanoP from Thermosynechococcus vestitus (strain NIES-2133 / IAM M-273 / BP-1).